Reading from the N-terminus, the 251-residue chain is Ubiquinone/menaquinone biosynthesis C-methyltransferase UbiE (251 aa).

Residues threonine 74, aspartate 95, 123-124 (NA), and serine 140 each bind S-adenosyl-L-methionine.

Belongs to the class I-like SAM-binding methyltransferase superfamily. MenG/UbiE family.

The catalysed reaction is a 2-demethylmenaquinol + S-adenosyl-L-methionine = a menaquinol + S-adenosyl-L-homocysteine + H(+). The enzyme catalyses a 2-methoxy-6-(all-trans-polyprenyl)benzene-1,4-diol + S-adenosyl-L-methionine = a 5-methoxy-2-methyl-3-(all-trans-polyprenyl)benzene-1,4-diol + S-adenosyl-L-homocysteine + H(+). Its pathway is quinol/quinone metabolism; menaquinone biosynthesis; menaquinol from 1,4-dihydroxy-2-naphthoate: step 2/2. It functions in the pathway cofactor biosynthesis; ubiquinone biosynthesis. Its function is as follows. Methyltransferase required for the conversion of demethylmenaquinol (DMKH2) to menaquinol (MKH2) and the conversion of 2-polyprenyl-6-methoxy-1,4-benzoquinol (DDMQH2) to 2-polyprenyl-3-methyl-6-methoxy-1,4-benzoquinol (DMQH2). This is Ubiquinone/menaquinone biosynthesis C-methyltransferase UbiE from Proteus mirabilis (strain HI4320).